The sequence spans 368 residues: Anhydro-N-acetylmuramic acid kinase (368 aa).

11–18 contacts ATP; the sequence is GTSLDGID.

It belongs to the anhydro-N-acetylmuramic acid kinase family.

The enzyme catalyses 1,6-anhydro-N-acetyl-beta-muramate + ATP + H2O = N-acetyl-D-muramate 6-phosphate + ADP + H(+). Its pathway is amino-sugar metabolism; 1,6-anhydro-N-acetylmuramate degradation. It functions in the pathway cell wall biogenesis; peptidoglycan recycling. Its function is as follows. Catalyzes the specific phosphorylation of 1,6-anhydro-N-acetylmuramic acid (anhMurNAc) with the simultaneous cleavage of the 1,6-anhydro ring, generating MurNAc-6-P. Is required for the utilization of anhMurNAc either imported from the medium or derived from its own cell wall murein, and thus plays a role in cell wall recycling. The sequence is that of Anhydro-N-acetylmuramic acid kinase from Sulfurimonas denitrificans (strain ATCC 33889 / DSM 1251) (Thiomicrospira denitrificans (strain ATCC 33889 / DSM 1251)).